The sequence spans 180 residues: Large ribosomal subunit protein uL5 (180 aa).

Belongs to the universal ribosomal protein uL5 family. Part of the 50S ribosomal subunit; part of the 5S rRNA/L5/L18/L25 subcomplex. Contacts the 5S rRNA and the P site tRNA. Forms a bridge to the 30S subunit in the 70S ribosome.

In terms of biological role, this is one of the proteins that bind and probably mediate the attachment of the 5S RNA into the large ribosomal subunit, where it forms part of the central protuberance. In the 70S ribosome it contacts protein S13 of the 30S subunit (bridge B1b), connecting the 2 subunits; this bridge is implicated in subunit movement. Contacts the P site tRNA; the 5S rRNA and some of its associated proteins might help stabilize positioning of ribosome-bound tRNAs. The sequence is that of Large ribosomal subunit protein uL5 from Lactococcus lactis subsp. lactis (strain IL1403) (Streptococcus lactis).